Reading from the N-terminus, the 141-residue chain is Mitochondrial import inner membrane translocase subunit Tim16 (141 aa).

2 disordered regions span residues 34 to 53 (AARR…SNLR) and 108 to 141 (LDHE…RQRR). The segment at 60 to 113 (EAKQILNIDDPKNVDAITKNYEHLFQVNERSKGGSFYIQSKVFRAKERLDHEIK) is J-like. The span at 108–118 (LDHEIKAHEQP) shows a compositional bias: basic and acidic residues.

Belongs to the TIM16/PAM16 family. Probable component of the PAM complex at least composed of a mitochondrial HSP70 protein, Roe1, TIM44, blp/TIM16 and TIM14. Associates with the TIM23 complex. As to expression, expressed in distinct cells in the embryonic and larval nervous system.

Its subcellular location is the mitochondrion inner membrane. Its function is as follows. Regulates ATP-dependent protein translocation into the mitochondrial matrix. Essential for larval development. This Drosophila melanogaster (Fruit fly) protein is Mitochondrial import inner membrane translocase subunit Tim16 (blp).